Here is an 838-residue protein sequence, read N- to C-terminus: Semaphorin-4G (838 aa).

An N-terminal signal peptide occupies residues 1-17 (MWGRLWPLLLSILTATA). Over 18 to 675 (VPGPSLRRPS…GAQLAPDVRL (658 aa)) the chain is Extracellular. The 471-residue stretch at 35-505 (RMTIPYEELS…APSGVIQLPL (471 aa)) folds into the Sema domain. N55, N111, and N126 each carry an N-linked (GlcNAc...) asparagine glycan. Cysteines 104 and 115 form a disulfide. 3 disulfide bridges follow: C133-C142, C270-C377, and C294-C337. N388 carries N-linked (GlcNAc...) asparagine glycosylation. The PSI domain occupies 507–558 (SCSRYRSCYDCILARDPYCGWDPGTHACAAATTIANRTALIQDIERGNRGCE). 2 disulfides stabilise this stretch: C508-C525 and C517-C534. N-linked (GlcNAc...) asparagine glycosylation is found at N542 and N598. The Ig-like C2-type domain maps to 567–649 (PPLKTRSVLR…RTLLASYSLT (83 aa)). A disulfide bond links C584 and C632. Residues 676 to 696 (LYVLAIAALGGLCLILASSLL) traverse the membrane as a helical segment. Over 697–838 (YVACLREGRR…LVEQLDESSV (142 aa)) the chain is Cytoplasmic. The disordered stretch occupies residues 723-777 (SAVQLQTVSGQCPGEEDEGDDEGAGGLEGSCLQIIPGEGAPAPPPPPPPPPPAEL). The segment covering 736–745 (GEEDEGDDEG) has biased composition (acidic residues). Residues 763–775 (PAPPPPPPPPPPA) are compositionally biased toward pro residues. Phosphoserine occurs at positions 795 and 837.

This sequence belongs to the semaphorin family. Interacts with PLXNB2.

Its subcellular location is the cell membrane. Functionally, cell surface receptor for PLXNB2. May play a role in axon guidance. This chain is Semaphorin-4G (SEMA4G), found in Homo sapiens (Human).